The chain runs to 1004 residues: Hyaluronate lyase HylB (1004 aa).

An N-terminal signal peptide occupies residues 1 to 29 (MKNRKIWVMLVGLFTALTNGFMGTTLTFA). Residues H468, Y477, and R531 contribute to the active site.

This sequence belongs to the polysaccharide lyase 8 family.

Its subcellular location is the secreted. It carries out the reaction [hyaluronan](n) = n 3-(4-deoxy-beta-D-gluc-4-enuronosyl)-N-acetyl-D-glucosamine + H2O. It catalyses the reaction Eliminative degradation of polysaccharides containing 1,4-beta-D-hexosaminyl and 1,3-beta-D-glucuronosyl linkages to disaccharides containing 4-deoxy-beta-D-gluc-4-enuronosyl groups.. Its function is as follows. Degrades hyaluronic acid (HA) and chondroitin sulfate (CS) A in vitro. Is not active against heparin sodium salt (HS). Involved in the pathogenesis of vancomycin-resistant E.faecalis infections. Contributes to attenuation of the lipopolysaccharide (LPS)-mediated nuclear factor (NF)-kappa-B activation assayed in the mouse RAW-Blue reporter macrophages. This chain is Hyaluronate lyase HylB, found in Enterococcus faecalis (strain ATCC 700802 / V583).